We begin with the raw amino-acid sequence, 138 residues long: Putative pre-16S rRNA nuclease (138 aa).

This sequence belongs to the YqgF nuclease family.

It is found in the cytoplasm. In terms of biological role, could be a nuclease involved in processing of the 5'-end of pre-16S rRNA. This is Putative pre-16S rRNA nuclease from Flavobacterium johnsoniae (strain ATCC 17061 / DSM 2064 / JCM 8514 / BCRC 14874 / CCUG 350202 / NBRC 14942 / NCIMB 11054 / UW101) (Cytophaga johnsonae).